The sequence spans 62 residues: Large ribosomal subunit protein bL28 (62 aa).

This sequence belongs to the bacterial ribosomal protein bL28 family.

This chain is Large ribosomal subunit protein bL28, found in Helicobacter pylori (strain HPAG1).